A 361-amino-acid chain; its full sequence is Riboflavin biosynthesis protein RibD (361 aa).

The 122-residue stretch at 1–122 (MEEYYMKLAL…MMKEAGIEVR (122 aa)) folds into the CMP/dCMP-type deaminase domain. Residues 1 to 144 (MEEYYMKLAL…EKFLHFMRTG (144 aa)) are deaminase. A Zn(2+)-binding site is contributed by His49. The active-site Proton donor is Glu51. Zn(2+) is bound by residues Cys74 and Cys83. Positions 145–361 (LPYVTLKAAA…IKLTAKPTKE (217 aa)) are reductase. Ala153 is an NADP(+) binding site. Position 167 (Ser167) interacts with substrate. NADP(+) is bound at residue Trp169. Position 183 (Arg183) interacts with substrate. Residues Thr195 and Asp199 each contribute to the NADP(+) site. Residues Leu203 and Arg206 each coordinate substrate. Thr221 lines the NADP(+) pocket. Position 290 (Glu290) interacts with substrate. 292–298 (GSAVHGS) lines the NADP(+) pocket.

The protein in the N-terminal section; belongs to the cytidine and deoxycytidylate deaminase family. This sequence in the C-terminal section; belongs to the HTP reductase family. In terms of assembly, homotetramer. The cofactor is Zn(2+).

The enzyme catalyses 2,5-diamino-6-hydroxy-4-(5-phosphoribosylamino)-pyrimidine + H2O + H(+) = 5-amino-6-(5-phospho-D-ribosylamino)uracil + NH4(+). The catalysed reaction is 5-amino-6-(5-phospho-D-ribitylamino)uracil + NADP(+) = 5-amino-6-(5-phospho-D-ribosylamino)uracil + NADPH + H(+). Its pathway is cofactor biosynthesis; riboflavin biosynthesis; 5-amino-6-(D-ribitylamino)uracil from GTP: step 2/4. The protein operates within cofactor biosynthesis; riboflavin biosynthesis; 5-amino-6-(D-ribitylamino)uracil from GTP: step 3/4. Its function is as follows. Converts 2,5-diamino-6-(ribosylamino)-4(3h)-pyrimidinone 5'-phosphate into 5-amino-6-(ribosylamino)-2,4(1h,3h)-pyrimidinedione 5'-phosphate. In Bacillus subtilis (strain 168), this protein is Riboflavin biosynthesis protein RibD (ribD).